Consider the following 278-residue polypeptide: S-formylglutathione hydrolase YeiG (278 aa).

Catalysis depends on charge relay system residues Ser145, Asp223, and His256.

Belongs to the esterase D family.

It catalyses the reaction S-formylglutathione + H2O = formate + glutathione + H(+). Its function is as follows. Serine hydrolase involved in the detoxification of formaldehyde. Hydrolyzes S-formylglutathione to glutathione and formate. This Shigella boydii serotype 4 (strain Sb227) protein is S-formylglutathione hydrolase YeiG (yeiG).